An 81-amino-acid chain; its full sequence is Penaeidin-3c (81 aa).

Residues 1 to 19 form the signal peptide; it reads MRLVVCLVFLASFALVCQG. Position 20 is a pyrrolidone carboxylic acid (Gln20). Cystine bridges form between Cys50–Cys65, Cys54–Cys72, and Cys66–Cys73. Serine amide is present on Ser80.

This sequence belongs to the penaeidin family. In terms of tissue distribution, higher expression in hemocytes and to a lesser extent in heart, testis, gills, intestine, lymphoid organ and hepatopancreas. Traces in eyes and subcuticular epithelium. Not present in the brain.

Its subcellular location is the cytoplasmic granule. Functionally, antibacterial activity against M.luteus and E.coli bacteria. Antifungal activity against N.crassa and F.oxysporum. Presents chitin-binding activity. This chain is Penaeidin-3c, found in Penaeus vannamei (Whiteleg shrimp).